Consider the following 152-residue polypeptide: Deoxyuridine 5'-triphosphate nucleotidohydrolase (152 aa).

Substrate is bound by residues 71-73 (RSG), asparagine 84, 88-90 (LID), and methionine 98.

It belongs to the dUTPase family. Requires Mg(2+) as cofactor.

The enzyme catalyses dUTP + H2O = dUMP + diphosphate + H(+). The protein operates within pyrimidine metabolism; dUMP biosynthesis; dUMP from dCTP (dUTP route): step 2/2. In terms of biological role, this enzyme is involved in nucleotide metabolism: it produces dUMP, the immediate precursor of thymidine nucleotides and it decreases the intracellular concentration of dUTP so that uracil cannot be incorporated into DNA. The sequence is that of Deoxyuridine 5'-triphosphate nucleotidohydrolase from Pectobacterium carotovorum subsp. carotovorum (strain PC1).